The primary structure comprises 104 residues: Cell division protein FtsL (104 aa).

Residues 1–19 (MSTPNTHLLCLIATDLRKH) are Cytoplasmic-facing. The chain crosses the membrane as a helical span at residues 20–39 (FFAVLVGMLIVCSAIYNVYT). At 40–104 (THKTRGLVTQ…KKNSVLVELR (65 aa)) the chain is on the periplasmic side.

The protein belongs to the FtsL family. In terms of assembly, part of a complex composed of FtsB, FtsL and FtsQ.

The protein resides in the cell inner membrane. Essential cell division protein. May link together the upstream cell division proteins, which are predominantly cytoplasmic, with the downstream cell division proteins, which are predominantly periplasmic. The sequence is that of Cell division protein FtsL from Psychromonas ingrahamii (strain DSM 17664 / CCUG 51855 / 37).